A 1205-amino-acid chain; its full sequence is ATP-dependent DNA helicase MER3 homolog (1205 aa).

The 196-residue stretch at 41–236 (PACFLSDVNM…WLAVPSEGIK (196 aa)) folds into the Helicase ATP-binding domain. Residue 54-61 (APTGSGKT) coordinates ATP. Positions 172-175 (DEVH) match the DEAH box motif. One can recognise a Helicase C-terminal domain in the interval 266–467 (RLQSFIFDIL…CAVEHLNAEI (202 aa)). The 312-residue stretch at 541–852 (PLEPGRLMTK…FEEYVGLDIH (312 aa)) folds into the SEC63 domain. A compositionally biased stretch (polar residues) spans 1075–1091 (QKSEILNRTQGKNSTQL). The interval 1075–1131 (QKSEILNRTQGKNSTQLAGKKAFEKSKTPDENSLHFVGKRDSSSEKSKALSKTPDEN) is disordered. Over residues 1095–1122 (KAFEKSKTPDENSLHFVGKRDSSSEKSK) the composition is skewed to basic and acidic residues.

This sequence belongs to the helicase family. SKI2 subfamily. Transcribed preferentially in early stages of meiocyte development and during meiosis in young flowers.

It localises to the nucleus. Its subcellular location is the chromosome. The catalysed reaction is Couples ATP hydrolysis with the unwinding of duplex DNA by translocating in the 3'-5' direction.. The enzyme catalyses ATP + H2O = ADP + phosphate + H(+). In terms of biological role, DNA helicase required for crossover formation, complete synapsis of homologous chromosomes and bivalent formation during meiosis. Is specific to recombination events resulting in interference-sensitive crossovers (class I meiotic crossover). Works cooperatively with ZIP4 to promote crossovers. The chain is ATP-dependent DNA helicase MER3 homolog from Oryza sativa subsp. japonica (Rice).